The sequence spans 182 residues: Dynactin subunit 5 (182 aa).

N-acetylmethionine is present on M1.

Belongs to the dynactin subunits 5/6 family. Dynactin subunit 5 subfamily. Subunit of dynactin, a multiprotein complex part of a tripartite complex with dynein and a adapter, such as BICDL1, BICD2 or HOOK3. The dynactin complex is built around ACTR1A/ACTB filament and consists of an actin-related filament composed of a shoulder domain, a pointed end and a barbed end. Its length is defined by its flexible shoulder domain. The soulder is composed of 2 DCTN1 subunits, 4 DCTN2 and 2 DCTN3. The 4 DCNT2 (via N-terminus) bind the ACTR1A filament and act as molecular rulers to determine the length. The pointed end is important for binding dynein-dynactin cargo adapters. Consists of 4 subunits: ACTR10, DCNT4, DCTN5 and DCTN6. Within the complex DCTN6 forms a heterodimer with DCTN5. The barbed end is composed of a CAPZA1:CAPZB heterodimers, which binds ACTR1A/ACTB filament and dynactin and stabilizes dynactin. Interacts with N4BP2L1.

Its subcellular location is the cytoplasm. It is found in the cytoskeleton. The protein resides in the chromosome. The protein localises to the centromere. It localises to the kinetochore. Part of the dynactin complex that activates the molecular motor dynein for ultra-processive transport along microtubules. In Pongo abelii (Sumatran orangutan), this protein is Dynactin subunit 5 (DCTN5).